A 190-amino-acid polypeptide reads, in one-letter code: Xanthine phosphoribosyltransferase (190 aa).

Positions 20 and 27 each coordinate xanthine. 129–133 (ANGRA) is a 5-phospho-alpha-D-ribose 1-diphosphate binding site. Lysine 157 serves as a coordination point for xanthine.

This sequence belongs to the purine/pyrimidine phosphoribosyltransferase family. Xpt subfamily. As to quaternary structure, homodimer.

The protein localises to the cytoplasm. The enzyme catalyses XMP + diphosphate = xanthine + 5-phospho-alpha-D-ribose 1-diphosphate. It participates in purine metabolism; XMP biosynthesis via salvage pathway; XMP from xanthine: step 1/1. In terms of biological role, converts the preformed base xanthine, a product of nucleic acid breakdown, to xanthosine 5'-monophosphate (XMP), so it can be reused for RNA or DNA synthesis. This is Xanthine phosphoribosyltransferase from Clostridioides difficile (strain 630) (Peptoclostridium difficile).